Here is a 335-residue protein sequence, read N- to C-terminus: RNA polymerase sigma factor RpoS (335 aa).

Positions 57-90 (DATQMYLSEIGFSPLLTAEEEVLYARRALRGDEA) are sigma-70 factor domain-1. Positions 95 to 165 (MIESNLRLVV…ERALMNQTRT (71 aa)) are sigma-70 factor domain-2. The Interaction with polymerase core subunit RpoC motif lies at 119–122 (DLIE). The tract at residues 175-250 (ELNIYLRTAR…DSHNADPEFS (76 aa)) is sigma-70 factor domain-3. The sigma-70 factor domain-4 stretch occupies residues 263 to 316 (WLDELNPKQKEVLARRFGLLGYEPSTLEEVGREINLTRERVRQIQVEGLRRLRE). Residues 289–308 (LEEVGREINLTRERVRQIQV) constitute a DNA-binding region (H-T-H motif).

The protein belongs to the sigma-70 factor family. RpoS subfamily. In terms of assembly, interacts with the RNA polymerase core enzyme.

The protein resides in the cytoplasm. Its function is as follows. Sigma factors are initiation factors that promote the attachment of RNA polymerase to specific initiation sites and are then released. This sigma factor is the master transcriptional regulator of the stationary phase and the general stress response. May be required for the persistence of V.cholerae in aquatic habitats. The chain is RNA polymerase sigma factor RpoS from Vibrio cholerae serotype O1 (strain ATCC 39315 / El Tor Inaba N16961).